Here is a 459-residue protein sequence, read N- to C-terminus: MSNKAWGGRFEVQPEEWVDDFNASITFDQTLINQDIEGSIAHATMLANQGIISQQDSEQIIQGLKSIQHDYHQDQIQFSASLEDIHLNIEHELIKRIGDAGGKLHTGRSRNDQVATDMHLYTKKQVQDIIALIKSLQSVIVDIASNNVDTIMPGYTHLQRAQPISFAHHIMTYFWMLQRDQQRFEDSLKRIDINPLGAAALSGTTYPIDRHETTALLNFGSLYENSLDAVSDRDYIIETLHNISLTMVHLSRFAEEIIFWSTDEAKFITLSDAFSTGSSIMPQKKNPDMAELIRGKVGRTTGHLMSMLMTLKGLPLAYNKDMQEDKEGLFDAVHTIKGSLRIFEGMIQTMTINKERLNQTVKEDFSNATELADYLVTKNIPFRTAHEIVGKIVLECIQQGHYLLDVPLATYQQHHSSIDADIYDYLQPENCLKRRQSYGSTGQSSVKQQLDVAKQLLSQ.

The protein belongs to the lyase 1 family. Argininosuccinate lyase subfamily.

It is found in the cytoplasm. It catalyses the reaction 2-(N(omega)-L-arginino)succinate = fumarate + L-arginine. Its pathway is amino-acid biosynthesis; L-arginine biosynthesis; L-arginine from L-ornithine and carbamoyl phosphate: step 3/3. The sequence is that of Argininosuccinate lyase from Staphylococcus aureus (strain MSSA476).